The primary structure comprises 449 residues: MLNYTELENKNVLVVGLAKSGYEAAKLLLKLGANVKVNDGKDLSQDAHAKDLESMGIEVISGSHPFSLLDDDPIIVKNPGIPYTVSIIKEATNRGLKILTEVELSYLISEAPIIAVTGTNGKTTVTSLIGDMFQKSVLTGRLSGNIGYVASKVAQEVKSDEYLITELSSFQLLGIEEYKPHIAIITNIYSAHLDYHETLENYQNAKKQIYKNQTKDDYLICNYHQRHLIESENLEAKTFYFSTQQEVDGIYIKDGFIVFNGIRIINTKDLVLPGEHNLENILAAVLASIIAGVPVKAIVDSLVTFSGIDHRLQYIGTNRTNKYYNDSKATNTLATQFALNSFDQPIIWLCGGLDRGNEFDELIPYMENVRVMVVFGETQDKFAKLGNSQGKYVIKATDVEDAVDKIQDIVEPNDVVLLSPACASWDQYHTFEERGEKFIDRFRAHLPSY.

118–124 serves as a coordination point for ATP; that stretch reads GTNGKTT.

Belongs to the MurCDEF family.

It is found in the cytoplasm. It carries out the reaction UDP-N-acetyl-alpha-D-muramoyl-L-alanine + D-glutamate + ATP = UDP-N-acetyl-alpha-D-muramoyl-L-alanyl-D-glutamate + ADP + phosphate + H(+). It participates in cell wall biogenesis; peptidoglycan biosynthesis. In terms of biological role, cell wall formation. Catalyzes the addition of glutamate to the nucleotide precursor UDP-N-acetylmuramoyl-L-alanine (UMA). The protein is UDP-N-acetylmuramoylalanine--D-glutamate ligase of Staphylococcus epidermidis (strain ATCC 12228 / FDA PCI 1200).